Reading from the N-terminus, the 78-residue chain is DNA-directed RNA polymerase subunit omega (78 aa).

This sequence belongs to the RNA polymerase subunit omega family. As to quaternary structure, in cyanobacteria the RNAP catalytic core is composed of 2 alpha, 1 beta, 1 beta', 1 gamma and 1 omega subunit. When a sigma factor is associated with the core the holoenzyme is formed, which can initiate transcription.

It catalyses the reaction RNA(n) + a ribonucleoside 5'-triphosphate = RNA(n+1) + diphosphate. Functionally, promotes RNA polymerase assembly. Latches the N- and C-terminal regions of the beta' subunit thereby facilitating its interaction with the beta and alpha subunits. The chain is DNA-directed RNA polymerase subunit omega from Prochlorococcus marinus (strain MIT 9301).